Reading from the N-terminus, the 620-residue chain is Membrane protein insertase YidC (620 aa).

Transmembrane regions (helical) follow at residues 5 to 25 (QIIG…FMST), 343 to 363 (LGWP…FDGL), 366 to 386 (VFSS…LVLL), 436 to 456 (LSGC…FNFF), 482 to 502 (LPFT…LMTI), and 529 to 549 (PVVF…YYFV).

This sequence belongs to the OXA1/ALB3/YidC family. Type 1 subfamily. In terms of assembly, interacts with the Sec translocase complex via SecD. Specifically interacts with transmembrane segments of nascent integral membrane proteins during membrane integration.

Its subcellular location is the cell inner membrane. Required for the insertion and/or proper folding and/or complex formation of integral membrane proteins into the membrane. Involved in integration of membrane proteins that insert both dependently and independently of the Sec translocase complex, as well as at least some lipoproteins. Aids folding of multispanning membrane proteins. The polypeptide is Membrane protein insertase YidC (Cytophaga hutchinsonii (strain ATCC 33406 / DSM 1761 / CIP 103989 / NBRC 15051 / NCIMB 9469 / D465)).